We begin with the raw amino-acid sequence, 241 residues long: ATP synthase subunit a (241 aa).

A run of 5 helical transmembrane segments spans residues 30-50 (GQVFLSSWILIGILLAVVLVG), 89-109 (LPFIGTLFLFIFVSNWGGALI), 128-148 (INTTVAMALLVSLAYFYAGLS), 193-213 (LAVGVLVYLVPLIVPLPVMLL), and 214-234 (GLFTSAIQALIFATLASFYIG).

It belongs to the ATPase A chain family. F-type ATPases have 2 components, CF(1) - the catalytic core - and CF(0) - the membrane proton channel. CF(1) has five subunits: alpha(3), beta(3), gamma(1), delta(1), epsilon(1). CF(0) has four main subunits: a, b, b' and c.

It localises to the cellular thylakoid membrane. Functionally, key component of the proton channel; it plays a direct role in the translocation of protons across the membrane. The chain is ATP synthase subunit a from Synechococcus sp. (strain CC9605).